A 403-amino-acid chain; its full sequence is Chalcone synthase 2 (403 aa).

R59 to S66 serves as a coordination point for CoA. Residue C168 is the Acyl-thioester intermediate of the active site. G220 to D221 is a substrate binding site. CoA is bound at residue A313.

This sequence belongs to the thiolase-like superfamily. Chalcone/stilbene synthases family. As to quaternary structure, homodimer.

The catalysed reaction is (E)-4-coumaroyl-CoA + 3 malonyl-CoA + 3 H(+) = 2',4,4',6'-tetrahydroxychalcone + 3 CO2 + 4 CoA. It participates in secondary metabolite biosynthesis; flavonoid biosynthesis. In terms of biological role, the primary product of this enzyme is 4,2',4',6'-tetrahydroxychalcone (also termed naringenin-chalcone or chalcone) which can under specific conditions spontaneously isomerize into naringenin. The chain is Chalcone synthase 2 (CHS2) from Oryza sativa subsp. japonica (Rice).